A 73-amino-acid polypeptide reads, in one-letter code: Large ribosomal subunit protein bL31 (73 aa).

Zn(2+)-binding residues include Cys-16, Cys-18, Cys-37, and Cys-40.

The protein belongs to the bacterial ribosomal protein bL31 family. Type A subfamily. Part of the 50S ribosomal subunit. Zn(2+) is required as a cofactor.

Its function is as follows. Binds the 23S rRNA. In Pseudomonas syringae pv. syringae (strain B728a), this protein is Large ribosomal subunit protein bL31.